We begin with the raw amino-acid sequence, 485 residues long: Glutamate--tRNA ligase 1 (485 aa).

The 'HIGH' region motif lies at 10-20 (PSPTGAIHIGN). Positions 252 to 256 (KLSKR) match the 'KMSKS' region motif. Lys-255 is a binding site for ATP.

The protein belongs to the class-I aminoacyl-tRNA synthetase family. Glutamate--tRNA ligase type 1 subfamily. As to quaternary structure, monomer.

The protein resides in the cytoplasm. The catalysed reaction is tRNA(Glu) + L-glutamate + ATP = L-glutamyl-tRNA(Glu) + AMP + diphosphate. In terms of biological role, catalyzes the attachment of glutamate to tRNA(Glu) in a two-step reaction: glutamate is first activated by ATP to form Glu-AMP and then transferred to the acceptor end of tRNA(Glu). The protein is Glutamate--tRNA ligase 1 of Thermoanaerobacter sp. (strain X514).